The sequence spans 400 residues: MLTLVLNCGSSSVKFALLDLSANLTLLSGLAERLGSTGAVATLSRGENRRSVPVPDGSYAGAFEVVRAELGALGVREQVRAVGHRVVHGGERFSAPALIDAKVMAAIRACVPLAPLHNPANIAGIEAAQEAFGQLPHVAVFDTAFHQTMPDVAFRYAVPESWYAQHGVRRYGFHGTSHAYVAAEAARMLGMPLDALNLVTAHLGNGCSVAAVQGGRSIDTSMGLTPLEGLIMGTRSGDVDPGLHEFMARQAGLSLTQVTAALNKESGLSGLSGGLGSDMRELEAAAGRGHTGARLAVAAFVYRLAKGVAGMAVALGHLDALVFTGGIGENSATIRAATLERLGVLGFRLDQQANAQAVRGQPGLISAAGSVPALVVNTNEELSIARQTRQVLAAQTGDQA.

Residue Asn7 coordinates Mg(2+). Lys14 is an ATP binding site. Arg85 lines the substrate pocket. Residue Asp142 is the Proton donor/acceptor of the active site. ATP contacts are provided by residues 202 to 206, 278 to 280, and 326 to 330; these read HLGNG, DMR, and GIGEN. Glu380 lines the Mg(2+) pocket.

Belongs to the acetokinase family. In terms of assembly, homodimer. Mg(2+) is required as a cofactor. Mn(2+) serves as cofactor.

The protein localises to the cytoplasm. The catalysed reaction is acetate + ATP = acetyl phosphate + ADP. It participates in metabolic intermediate biosynthesis; acetyl-CoA biosynthesis; acetyl-CoA from acetate: step 1/2. Its function is as follows. Catalyzes the formation of acetyl phosphate from acetate and ATP. Can also catalyze the reverse reaction. This is Acetate kinase from Deinococcus deserti (strain DSM 17065 / CIP 109153 / LMG 22923 / VCD115).